The chain runs to 511 residues: Sterol 14-alpha demethylase resB (511 aa).

A helical membrane pass occupies residues Ile-3–Val-23. Cys-451 contributes to the heme binding site.

This sequence belongs to the cytochrome P450 family. Requires heme as cofactor.

It localises to the membrane. It catalyses the reaction a 14alpha-methyl steroid + 3 reduced [NADPH--hemoprotein reductase] + 3 O2 = a Delta(14) steroid + formate + 3 oxidized [NADPH--hemoprotein reductase] + 4 H2O + 4 H(+). The catalysed reaction is a 14alpha-methyl steroid + reduced [NADPH--hemoprotein reductase] + O2 = a 14alpha-hydroxymethyl steroid + oxidized [NADPH--hemoprotein reductase] + H2O + H(+). It carries out the reaction a 14alpha-hydroxymethyl steroid + reduced [NADPH--hemoprotein reductase] + O2 = a 14alpha-formyl steroid + oxidized [NADPH--hemoprotein reductase] + 2 H2O + H(+). The enzyme catalyses a 14alpha-formyl steroid + reduced [NADPH--hemoprotein reductase] + O2 = a Delta(14) steroid + formate + oxidized [NADPH--hemoprotein reductase] + H2O + 2 H(+). It catalyses the reaction lanosterol + 3 reduced [NADPH--hemoprotein reductase] + 3 O2 = 4,4-dimethyl-5alpha-cholesta-8,14,24-trien-3beta-ol + formate + 3 oxidized [NADPH--hemoprotein reductase] + 4 H2O + 4 H(+). The catalysed reaction is lanosterol + reduced [NADPH--hemoprotein reductase] + O2 = 32-hydroxylanosterol + oxidized [NADPH--hemoprotein reductase] + H2O + H(+). It carries out the reaction 32-hydroxylanosterol + reduced [NADPH--hemoprotein reductase] + O2 = 32-oxolanosterol + oxidized [NADPH--hemoprotein reductase] + 2 H2O + H(+). The enzyme catalyses 32-oxolanosterol + reduced [NADPH--hemoprotein reductase] + O2 = 4,4-dimethyl-5alpha-cholesta-8,14,24-trien-3beta-ol + formate + oxidized [NADPH--hemoprotein reductase] + H2O + 2 H(+). It catalyses the reaction eburicol + 3 reduced [NADPH--hemoprotein reductase] + 3 O2 = 14-demethyleburicol + formate + 3 oxidized [NADPH--hemoprotein reductase] + 4 H2O + 4 H(+). The catalysed reaction is eburicol + reduced [NADPH--hemoprotein reductase] + O2 = 32-hydroxyeburicol + oxidized [NADPH--hemoprotein reductase] + H2O + H(+). It carries out the reaction 32-hydroxyeburicol + reduced [NADPH--hemoprotein reductase] + O2 = 32-oxoeburicol + oxidized [NADPH--hemoprotein reductase] + 2 H2O + H(+). The enzyme catalyses 32-oxoeburicol + reduced [NADPH--hemoprotein reductase] + O2 = 14-demethyleburicol + formate + oxidized [NADPH--hemoprotein reductase] + H2O + 2 H(+). Functionally, sterol 14-alpha demethylase; part of the gene cluster that mediates the biosynthesis of the tetrahydropyranyl antifungal agent restricticin that acts as an inhibitor of CYP51 and blocks the ergosterol biosynthesis. Sterol 14-alpha-demethylase plays a critical role in the biosynthesis of ergosterol, the major sterol component in fungal membranes that participates in a variety of functions. ResB acts as a self-resistant CYP51 that contains mutations found in CYP51s isolated from azole resistance strains and that is not inhibited by the final product of the cluster, restricticin. The polypeptide is Sterol 14-alpha demethylase resB (Aspergillus sclerotiorum).